A 254-amino-acid chain; its full sequence is Probable phosphoglycerate mutase 4 (254 aa).

Substrate-binding positions include 10-17 (RHGESTWN) and 23-24 (SC). Catalysis depends on H11, which acts as the Tele-phosphohistidine intermediate. S14 and S23 each carry phosphoserine. Position 26 is a phosphotyrosine (Y26). At S31 the chain carries Phosphoserine. Residues R62, 89 to 92 (ERHY), and K100 contribute to the substrate site. Residue E89 is the Proton donor/acceptor of the active site. Residue K106 is modified to N6-acetyllysine. Residue 116 to 117 (RR) coordinates substrate. Position 118 is a phosphoserine (S118). Substrate is bound at residue 187-188 (GN). K251 is modified (N6-acetyllysine; alternate). K251 is subject to N6-succinyllysine; alternate. N6-acetyllysine occurs at positions 253 and 254.

It belongs to the phosphoglycerate mutase family. BPG-dependent PGAM subfamily.

It carries out the reaction (2R)-2-phosphoglycerate = (2R)-3-phosphoglycerate. The catalysed reaction is (2R)-3-phospho-glyceroyl phosphate = (2R)-2,3-bisphosphoglycerate + H(+). The sequence is that of Probable phosphoglycerate mutase 4 (PGAM4) from Pan troglodytes (Chimpanzee).